The chain runs to 505 residues: Maturase K (505 aa).

This sequence belongs to the intron maturase 2 family. MatK subfamily.

The protein localises to the plastid. The protein resides in the chloroplast. Functionally, usually encoded in the trnK tRNA gene intron. Probably assists in splicing its own and other chloroplast group II introns. The chain is Maturase K from Illicium oligandrum (Star anise).